A 559-amino-acid polypeptide reads, in one-letter code: Urocanate hydratase (559 aa).

Residues 53–54 (GG), Q131, 177–179 (GMG), E197, R202, 243–244 (NA), 264–268 (QTSAH), 274–275 (YL), and Y323 each bind NAD(+). Residue C411 is part of the active site. NAD(+) is bound at residue G493.

The protein belongs to the urocanase family. Requires NAD(+) as cofactor.

The protein localises to the cytoplasm. It carries out the reaction 4-imidazolone-5-propanoate = trans-urocanate + H2O. It participates in amino-acid degradation; L-histidine degradation into L-glutamate; N-formimidoyl-L-glutamate from L-histidine: step 2/3. Functionally, catalyzes the conversion of urocanate to 4-imidazolone-5-propionate. This Pseudomonas aeruginosa (strain LESB58) protein is Urocanate hydratase.